The following is a 297-amino-acid chain: N-acetylneuraminate lyase (297 aa).

Positions 47 and 48 each coordinate aceneuramate. The active-site Proton donor is Tyr-137. The active-site Schiff-base intermediate with substrate is the Lys-165. Aceneuramate is bound by residues Thr-167, Gly-189, Asp-191, Glu-192, and Ser-208.

It belongs to the DapA family. NanA subfamily. Homotetramer.

Its subcellular location is the cytoplasm. The enzyme catalyses aceneuramate = aldehydo-N-acetyl-D-mannosamine + pyruvate. It participates in amino-sugar metabolism; N-acetylneuraminate degradation; D-fructose 6-phosphate from N-acetylneuraminate: step 1/5. In terms of biological role, catalyzes the reversible aldol cleavage of N-acetylneuraminic acid (sialic acid; Neu5Ac) to form pyruvate and N-acetylmannosamine (ManNAc) via a Schiff base intermediate. This chain is N-acetylneuraminate lyase, found in Escherichia fergusonii (strain ATCC 35469 / DSM 13698 / CCUG 18766 / IAM 14443 / JCM 21226 / LMG 7866 / NBRC 102419 / NCTC 12128 / CDC 0568-73).